Reading from the N-terminus, the 202-residue chain is MSRYRGPRLRVTRRLGELPGLTRKASKKSNPPGQHGQARRKRSEYAIRLEEKQKLRFNYGVSERQLVRYVKKARAQEGSTGTNLLRLLENRLDNVCFRLGFGGTIPGSRQLVNHGHVTINGKVLDIAGYQCKPGDVISIKENKASKKLVEGNIEFPGLANVPPHIELDKPKLTGKINGKCDREWVALEINELLVVEYYSRKV.

Residues 1-13 show a composition bias toward basic residues; it reads MSRYRGPRLRVTR. A disordered region spans residues 1 to 42; that stretch reads MSRYRGPRLRVTRRLGELPGLTRKASKKSNPPGQHGQARRKR. The S4 RNA-binding domain occupies 90 to 152; sequence NRLDNVCFRL…KASKKLVEGN (63 aa).

It belongs to the universal ribosomal protein uS4 family. In terms of assembly, part of the 30S ribosomal subunit. Contacts protein S5. The interaction surface between S4 and S5 is involved in control of translational fidelity.

Functionally, one of the primary rRNA binding proteins, it binds directly to 16S rRNA where it nucleates assembly of the body of the 30S subunit. In terms of biological role, with S5 and S12 plays an important role in translational accuracy. In Prochlorococcus marinus subsp. pastoris (strain CCMP1986 / NIES-2087 / MED4), this protein is Small ribosomal subunit protein uS4.